The following is a 392-amino-acid chain: Succinate--CoA ligase [ADP-forming] subunit beta (392 aa).

The ATP-grasp domain maps to 9 to 244; that stretch reads KALLAQYGVG…LSEEESSEIE (236 aa). ATP is bound by residues K46, 53-55, E99, L102, and E107; that span reads GRG. Positions 199 and 213 each coordinate Mg(2+). Substrate is bound by residues N264 and 321 to 323; that span reads GIV.

This sequence belongs to the succinate/malate CoA ligase beta subunit family. As to quaternary structure, heterotetramer of two alpha and two beta subunits. It depends on Mg(2+) as a cofactor.

The enzyme catalyses succinate + ATP + CoA = succinyl-CoA + ADP + phosphate. It carries out the reaction GTP + succinate + CoA = succinyl-CoA + GDP + phosphate. It functions in the pathway carbohydrate metabolism; tricarboxylic acid cycle; succinate from succinyl-CoA (ligase route): step 1/1. In terms of biological role, succinyl-CoA synthetase functions in the citric acid cycle (TCA), coupling the hydrolysis of succinyl-CoA to the synthesis of either ATP or GTP and thus represents the only step of substrate-level phosphorylation in the TCA. The beta subunit provides nucleotide specificity of the enzyme and binds the substrate succinate, while the binding sites for coenzyme A and phosphate are found in the alpha subunit. This is Succinate--CoA ligase [ADP-forming] subunit beta from Wolinella succinogenes (strain ATCC 29543 / DSM 1740 / CCUG 13145 / JCM 31913 / LMG 7466 / NCTC 11488 / FDC 602W) (Vibrio succinogenes).